Consider the following 556-residue polypeptide: Putative protein SPATA31F2P (556 aa).

Disordered regions lie at residues 133–154 and 210–231; these read ALKA…SGSD and LPKT…WVSP. Polar residues predominate over residues 144–154; that stretch reads SGGQDNDSGSD.

Belongs to the SPATA31 family.

This Homo sapiens (Human) protein is Putative protein SPATA31F2P.